We begin with the raw amino-acid sequence, 331 residues long: tRNA N6-adenosine threonylcarbamoyltransferase (331 aa).

Histidine 107 and histidine 111 together coordinate Fe cation. Substrate contacts are provided by residues 129 to 133, aspartate 162, glycine 175, and asparagine 269; that span reads LVSGG. Aspartate 297 contributes to the Fe cation binding site.

Belongs to the KAE1 / TsaD family. Requires Fe(2+) as cofactor.

It is found in the cytoplasm. It catalyses the reaction L-threonylcarbamoyladenylate + adenosine(37) in tRNA = N(6)-L-threonylcarbamoyladenosine(37) in tRNA + AMP + H(+). Functionally, required for the formation of a threonylcarbamoyl group on adenosine at position 37 (t(6)A37) in tRNAs that read codons beginning with adenine. Is involved in the transfer of the threonylcarbamoyl moiety of threonylcarbamoyl-AMP (TC-AMP) to the N6 group of A37, together with TsaE and TsaB. TsaD likely plays a direct catalytic role in this reaction. The chain is tRNA N6-adenosine threonylcarbamoyltransferase from Wolinella succinogenes (strain ATCC 29543 / DSM 1740 / CCUG 13145 / JCM 31913 / LMG 7466 / NCTC 11488 / FDC 602W) (Vibrio succinogenes).